Reading from the N-terminus, the 89-residue chain is Small ribosomal subunit protein uS14A (89 aa).

The protein belongs to the universal ribosomal protein uS14 family. Part of the 30S ribosomal subunit. Contacts proteins S3 and S10.

Functionally, binds 16S rRNA, required for the assembly of 30S particles and may also be responsible for determining the conformation of the 16S rRNA at the A site. This Listeria monocytogenes serotype 4b (strain F2365) protein is Small ribosomal subunit protein uS14A.